The following is a 440-amino-acid chain: 5-methylthioadenosine/S-adenosylhomocysteine deaminase (440 aa).

Residues histidine 69 and histidine 71 each contribute to the Zn(2+) site. Positions 98 and 190 each coordinate substrate. Histidine 217 lines the Zn(2+) pocket. Positions 220 and 305 each coordinate substrate. Residue aspartate 305 coordinates Zn(2+).

This sequence belongs to the metallo-dependent hydrolases superfamily. MTA/SAH deaminase family. Zn(2+) is required as a cofactor.

It catalyses the reaction S-adenosyl-L-homocysteine + H2O + H(+) = S-inosyl-L-homocysteine + NH4(+). The enzyme catalyses S-methyl-5'-thioadenosine + H2O + H(+) = S-methyl-5'-thioinosine + NH4(+). Its function is as follows. Catalyzes the deamination of 5-methylthioadenosine and S-adenosyl-L-homocysteine into 5-methylthioinosine and S-inosyl-L-homocysteine, respectively. Is also able to deaminate adenosine. The sequence is that of 5-methylthioadenosine/S-adenosylhomocysteine deaminase from Desulfovibrio desulfuricans (strain ATCC 27774 / DSM 6949 / MB).